The following is a 547-amino-acid chain: CDK5RAP1-like protein (547 aa).

Positions 79–194 (RTVCYVTYGC…LPRLVAVAAG (116 aa)) constitute an MTTase N-terminal domain. [4Fe-4S] cluster is bound by residues cysteine 88, cysteine 124, cysteine 157, cysteine 232, cysteine 236, and cysteine 239. The 258-residue stretch at 218-475 (DSASKTAFIS…TTVFREEALK (258 aa)) folds into the Radical SAM core domain. The region spanning 478-543 (QALIGSEQTV…SQTLKAQLIG (66 aa)) is the TRAM domain.

It belongs to the methylthiotransferase family. MiaB subfamily. The cofactor is [4Fe-4S] cluster.

Functionally, potential regulator of CDK5 activity. In Caenorhabditis elegans, this protein is CDK5RAP1-like protein.